The primary structure comprises 472 residues: Phosphoglucosamine mutase (472 aa).

S123 (phosphoserine intermediate) is an active-site residue. Residues S123, D262, D264, and D266 each contribute to the Mg(2+) site. S123 carries the post-translational modification Phosphoserine.

This sequence belongs to the phosphohexose mutase family. Mg(2+) serves as cofactor. Post-translationally, activated by phosphorylation.

It catalyses the reaction alpha-D-glucosamine 1-phosphate = D-glucosamine 6-phosphate. Catalyzes the conversion of glucosamine-6-phosphate to glucosamine-1-phosphate. The protein is Phosphoglucosamine mutase of Synechococcus elongatus (strain ATCC 33912 / PCC 7942 / FACHB-805) (Anacystis nidulans R2).